Here is a 597-residue protein sequence, read N- to C-terminus: Sodium/mannose cotransporter SLC5A10 (597 aa).

The Extracellular segment spans residues 1–16 (MVADNSTSDPHAPGPQ). A glycan (N-linked (GlcNAc...) asparagine) is linked at Asn5. Residues 17 to 37 (LSVTDIVVITVYFALNVAVGI) traverse the membrane as a helical segment. The Cytoplasmic segment spans residues 38 to 73 (WSSCRASRNTVSGYFLAGRDMTWWPIGASLFGSSEG). Ser49 carries the phosphoserine modification. A helical transmembrane segment spans residues 74-94 (SGLFIGLAGSGAAGGLAVAGF). At 95–100 (DWNATY) the chain is on the extracellular side. A helical transmembrane segment spans residues 101–121 (VLLALAWVFGAIYISSEIVTL). At 122-137 (AEYIQKRFGGQRIRMY) the chain is on the cytoplasmic side. The helical transmembrane segment at 138 to 158 (LSVLSLLLSVFTKISLDLYAG) threads the bilayer. At 159–171 (ALFVHICLGWNFY) the chain is on the extracellular side. The helical transmembrane segment at 172-194 (LSTILTLTITALYTITGGLVAVI) threads the bilayer. At 195–200 (YTDALQ) the chain is on the cytoplasmic side. A helical transmembrane segment spans residues 201-219 (TLIMVVGAVILAIKAFHQI). The Extracellular portion of the chain corresponds to 220–265 (DGYGQMEAAYARAIPSRTVANTTCHLPRADAMHMFRDPYTGDLPWT). Residues 266–286 (GMTFGLTIMATWYWCTDQVIV) form a helical membrane-spanning segment. Over 287–301 (QRSLSARNLNHAKAG) the chain is Cytoplasmic. A helical membrane pass occupies residues 302–322 (SILASYLKMLPMGLMIMPGMI). The Extracellular segment spans residues 323–367 (SRALFPDEVGCVVPSECLRACGAEIGCSNIAYPKLVMELMPVGLR). A helical transmembrane segment spans residues 368–390 (GLMIAVMMPALMSSLSSIFNSSS). Residues 391-410 (TLFTMDIWRRLRPCASEREL) lie on the Cytoplasmic side of the membrane. Residues 411-431 (LLVGRLVIVVLIGVSVAWIPV) traverse the membrane as a helical segment. Residues 432 to 444 (LQGSNGGQLFIYM) lie on the Extracellular side of the membrane. Residues 445–465 (QSVTSSLAPPVTAVFTLGIFW) traverse the membrane as a helical segment. Residues 466–472 (QRANEQG) lie on the Cytoplasmic side of the membrane. A helical membrane pass occupies residues 473–493 (AFWGLLAGLAVGATRLVLEFL). At 494-514 (HPAPPCGAADTRPAVLSQLHY) the chain is on the extracellular side. A helical membrane pass occupies residues 515–535 (LHFAVALFVLTGAVAVGGSLL). The Cytoplasmic portion of the chain corresponds to 536-576 (TPPPRRHQIENLTWWTLTRDLSLGAKAGDGQTPQRYTFWAR). Residues 577–597 (VCGFNAILLMCVNIFFYAYFA) form a helical membrane-spanning segment.

The protein belongs to the sodium:solute symporter (SSF) (TC 2.A.21) family. As to expression, expressed only in kidney.

It localises to the apical cell membrane. It catalyses the reaction D-mannose(out) + Na(+)(out) = D-mannose(in) + Na(+)(in). It carries out the reaction D-fructopyranose(out) + Na(+)(out) = D-fructopyranose(in) + Na(+)(in). In terms of biological role, electrogenic Na+-coupled sugar symporter that actively transports D-mannose or D-fructose at the plasma membrane, with a Na+ to sugar coupling ratio of 1:1. Transporter activity is driven by a transmembrane Na+ electrochemical gradient set by the Na+/K+ pump. Exclusively recognizes sugar substrates having a pyranose ring with an axial hydroxyl group on carbon 2. Has likely evolved to enable renal reabsorption of D-mannose, an important constituent of oligosaccharide chains of glycoproteins. Contributes to dietary D-fructose reabsorption from glomerular filtrate across the brush border of the kidney. The chain is Sodium/mannose cotransporter SLC5A10 (SLC5A10) from Oryctolagus cuniculus (Rabbit).